Consider the following 518-residue polypeptide: Sensor protein kinase HptS (518 aa).

2 consecutive transmembrane segments (helical) span residues Ile20 to Trp40 and Gly222 to Ile242. The Histidine kinase domain occupies Glu297–Arg513. His325 is subject to Phosphohistidine; by autocatalysis.

Post-translationally, autophosphorylated.

The protein resides in the cell membrane. It carries out the reaction ATP + protein L-histidine = ADP + protein N-phospho-L-histidine.. In terms of biological role, member of the two-component regulatory system HptS/HptR that regulates genes involved in hexose phosphate transport system in response to changes in extracellular phosphate sources. May act as a sensor protein kinase which is autophosphorylated at a histidine residue and transfers its phosphate group to the conserved aspartic acid residue in the regulatory domain of HptS. In turn, HptS antagonizes CcpA-dependent transcription of a subset of CcpA-regulated genes involved in antibiotic susceptibility. This is Sensor protein kinase HptS (hptS) from Staphylococcus aureus (strain MSSA476).